Reading from the N-terminus, the 340-residue chain is Anthranilate phosphoribosyltransferase (340 aa).

Residues Gly-81, 84-85 (GD), Thr-89, 91-94 (NIST), 109-117 (KHGNRNLSS), and Ala-121 each bind 5-phospho-alpha-D-ribose 1-diphosphate. Gly-81 lines the anthranilate pocket. Ser-93 is a binding site for Mg(2+). An anthranilate-binding site is contributed by Asn-112. Arg-167 serves as a coordination point for anthranilate. 2 residues coordinate Mg(2+): Asp-226 and Glu-227.

It belongs to the anthranilate phosphoribosyltransferase family. In terms of assembly, homodimer. Mg(2+) serves as cofactor.

The enzyme catalyses N-(5-phospho-beta-D-ribosyl)anthranilate + diphosphate = 5-phospho-alpha-D-ribose 1-diphosphate + anthranilate. Its pathway is amino-acid biosynthesis; L-tryptophan biosynthesis; L-tryptophan from chorismate: step 2/5. Catalyzes the transfer of the phosphoribosyl group of 5-phosphorylribose-1-pyrophosphate (PRPP) to anthranilate to yield N-(5'-phosphoribosyl)-anthranilate (PRA). The polypeptide is Anthranilate phosphoribosyltransferase (Ruegeria sp. (strain TM1040) (Silicibacter sp.)).